Here is a 1931-residue protein sequence, read N- to C-terminus: Chitin synthase 5 (1931 aa).

In terms of domain architecture, Myosin motor spans 11–777; it reads LGVTDLSSLA…LFRFLEDRLR (767 aa). ATP is bound at residue 122-129; sequence GPTGSGKS. N-linked (GlcNAc...) asparagine glycosylation is found at Asn510, Asn538, and Asn676. Residues 655 to 677 are actin-binding; sequence VDSLLKSFDQTQTWYIFALRPND. The interval 798-817 is disordered; it reads DPFSPHRYQPTSFDSQDHVY. Residue Asn842 is glycosylated (N-linked (GlcNAc...) asparagine). The next 2 membrane-spanning stretches (helical) occupy residues 912–932 and 951–971; these read WVWL…SKIA and MIIW…GPVI. Asn1062, Asn1078, and Asn1146 each carry an N-linked (GlcNAc...) asparagine glycan. A helical transmembrane segment spans residues 1220-1240; sequence ILLALSCVMVAVIGFKFLSAL. The N-linked (GlcNAc...) asparagine glycan is linked to Asn1583. A run of 3 helical transmembrane segments spans residues 1615–1635, 1641–1661, and 1668–1688; these read LSTI…YLIV, IPTL…MIFI, and MIAW…LLPL. The interval 1826 to 1847 is disordered; sequence AHRPSLDDTSSFHQPYQPAPRP. In terms of domain architecture, DEK-C spans 1875-1930; it reads AITDSQLERSIRKICANAELDKLTKKGVRKELEREYGVELTERREAINRLVEKVLT.

This sequence in the N-terminal section; belongs to the TRAFAC class CC myosin-kinesin ATPase superfamily. Myosin family. The protein in the C-terminal section; belongs to the chitin synthase family. Class V subfamily.

The protein resides in the cell membrane. It localises to the cell septum. The protein localises to the cell tip. The catalysed reaction is [(1-&gt;4)-N-acetyl-beta-D-glucosaminyl](n) + UDP-N-acetyl-alpha-D-glucosamine = [(1-&gt;4)-N-acetyl-beta-D-glucosaminyl](n+1) + UDP + H(+). Functionally, polymerizes chitin, a structural polymer of the cell wall and septum, by transferring the sugar moiety of UDP-GlcNAc to the non-reducing end of the growing chitin polymer. Produces a large proportion of the chitin that is not deacetylated to chitosan. The chain is Chitin synthase 5 from Cryptococcus neoformans var. grubii serotype A (strain H99 / ATCC 208821 / CBS 10515 / FGSC 9487) (Filobasidiella neoformans var. grubii).